Here is a 321-residue protein sequence, read N- to C-terminus: Altered inheritance of mitochondria protein 18, mitochondrial (321 aa).

Residues 1–72 constitute a mitochondrion transit peptide; it reads MDRGRCANML…LLATSLYYRD (72 aa).

This sequence belongs to the AIM18/AIM46 family.

The protein resides in the mitochondrion. The protein is Altered inheritance of mitochondria protein 18, mitochondrial (AIM18) of Saccharomyces cerevisiae (strain RM11-1a) (Baker's yeast).